The sequence spans 216 residues: Cytochrome c biogenesis ATP-binding export protein CcmA (216 aa).

Positions 11–216 constitute an ABC transporter domain; it reads LSANELTCIR…RKITLDYRFV (206 aa). 43 to 50 is an ATP binding site; sequence GPNGAGKT.

This sequence belongs to the ABC transporter superfamily. CcmA exporter (TC 3.A.1.107) family. In terms of assembly, the complex is composed of two ATP-binding proteins (CcmA) and two transmembrane proteins (CcmB).

Its subcellular location is the cell inner membrane. The enzyme catalyses heme b(in) + ATP + H2O = heme b(out) + ADP + phosphate + H(+). In terms of biological role, part of the ABC transporter complex CcmAB involved in the biogenesis of c-type cytochromes; once thought to export heme, this seems not to be the case, but its exact role is uncertain. Responsible for energy coupling to the transport system. The polypeptide is Cytochrome c biogenesis ATP-binding export protein CcmA (Shewanella frigidimarina (strain NCIMB 400)).